Consider the following 352-residue polypeptide: Serine protease 55 (352 aa).

The N-terminal stretch at 1–18 is a signal peptide; that stretch reads MLLFSVLLLLSLVTGTQL. The Peptidase S1 domain maps to 68–300; that stretch reads ITGGMEAEVG…YNLWIEKVTQ (233 aa). A disulfide bridge links Cys-93 with Cys-109. Catalysis depends on charge relay system residues His-108 and Asp-156. Intrachain disulfides connect Cys-189-Cys-256, Cys-222-Cys-235, and Cys-246-Cys-276. N-linked (GlcNAc...) asparagine glycosylation is present at Asn-240. The Charge relay system role is filled by Ser-250. The segment at 308-330 is disordered; it reads AEKRRTSVKQKPMGSPVSGVPEP. Low complexity predominate over residues 319 to 330; that stretch reads PMGSPVSGVPEP. The GPI-anchor amidated serine moiety is linked to residue Ser-325. Positions 326-352 are cleaved as a propeptide — removed in mature form; the sequence is GVPEPGSPRSWLLLCPLSHVLFRAILY.

The protein belongs to the peptidase S1 family. In terms of tissue distribution, only detected in testis. Expressed in spermatogonia, spermatocytes, spermatids, Leydig and Sertoli cells. Expressed in prostate cancer and ovarian cancer (at protein level).

The protein localises to the cell membrane. The protein resides in the cytoplasm. It localises to the cytosol. Functionally, probable serine protease, which plays a crucial role in the fertility of male mice including sperm migration and sperm-egg interaction. The sequence is that of Serine protease 55 (PRSS55) from Homo sapiens (Human).